Consider the following 360-residue polypeptide: NADP-dependent alcohol dehydrogenase 6 (360 aa).

Residue Cys-46 coordinates Zn(2+). Positions 47 and 51 each coordinate NADP(+). Residues His-68, Cys-100, Cys-103, Cys-106, and Cys-114 each coordinate Zn(2+). A Phosphoserine modification is found at Ser-131. Cys-163 serves as a coordination point for Zn(2+). Residues Leu-188, Gly-190, Ile-191, Ser-210, Arg-211, Lys-215, Cys-250, Ser-252, Thr-255, Asp-256, Ile-275, Ile-277, Tyr-298, Ser-299, Leu-301, and Arg-348 each coordinate NADP(+). Ser-359 carries the post-translational modification Phosphoserine.

It belongs to the zinc-containing alcohol dehydrogenase family. Homodimer. The cofactor is Zn(2+).

It is found in the cytoplasm. The protein resides in the nucleus. The catalysed reaction is a primary alcohol + NADP(+) = an aldehyde + NADPH + H(+). It carries out the reaction (E)-cinnamyl alcohol + NADP(+) = (E)-cinnamaldehyde + NADPH + H(+). The enzyme catalyses hexan-1-ol + NADP(+) = hexanal + NADPH + H(+). It catalyses the reaction 3-methylbutanol + NADP(+) = 3-methylbutanal + NADPH + H(+). The catalysed reaction is S-nitroso-CoA + NADPH + H(+) = sulfinamide-CoA + NADP(+). Its function is as follows. NADP-dependent, medium-chain alcohol dehydrogenase with a broad substrate specificity. Aldehydes exhibited 50-12000 times higher catalytic efficiency than the corresponding alcohols, therefore the major function of the enzyme is as an aldehyde reductase. The enzyme is active towards aromatic and aliphatic (linear and branched-chain) aldehydes. The enzyme is very active towards aromatic aldehydes, such as cinnamaldehyde, benzaldehyde and substituted benzaldehydes, such as veratraldehyde and panisaldehyde. It exhibits low activity towards substituted cinnamaldehydes, such as coniferaldehyde and sinapaldehyde. The enzyme has no activity with ketones, such as acetone or cyclohexanone. For the reverse reaction, linear and branched-chain primary alcohols are substrates, whereas very low activity is found with secondary alcohols, such as butan-2-ol. The enzyme may be physiologically involved in several steps of the lignin degradation pathway, initiated by other microorganisms, in the synthesis of fusel alcohols, products derived from the aminoacidic metabolism, and in the homeostasis of NADP(H). Has the ability to reduce 5-hydroxymethyl furfural (HMF), a furan derivative which is formed during the hydrolysis of lignocellulosic materials, to 5-hydroxymethylfurfuryl alcohol, thereby alleviating the inhibition of the fermentation of lignocellulose hydrolysates by HMF during fuel ethanol production. Also acts as an inhibitor of protein S-nitrosylation by mediating degradation of S-nitroso-coenzyme A (S-nitroso-CoA), a cofactor required to S-nitrosylate proteins. This is NADP-dependent alcohol dehydrogenase 6 from Saccharomyces cerevisiae (strain ATCC 204508 / S288c) (Baker's yeast).